A 1361-amino-acid chain; its full sequence is DNA-directed RNA polymerase subunit beta (1361 aa).

It belongs to the RNA polymerase beta chain family. In terms of assembly, the RNAP catalytic core consists of 2 alpha, 1 beta, 1 beta' and 1 omega subunit. When a sigma factor is associated with the core the holoenzyme is formed, which can initiate transcription.

It catalyses the reaction RNA(n) + a ribonucleoside 5'-triphosphate = RNA(n+1) + diphosphate. Functionally, DNA-dependent RNA polymerase catalyzes the transcription of DNA into RNA using the four ribonucleoside triphosphates as substrates. This is DNA-directed RNA polymerase subunit beta from Dichelobacter nodosus (strain VCS1703A).